A 330-amino-acid polypeptide reads, in one-letter code: uncharacterized protein (330 aa).

This is an uncharacterized protein from Schizosaccharomyces pombe (strain 972 / ATCC 24843) (Fission yeast).